A 329-amino-acid chain; its full sequence is Serine, glycine and glutamine-rich protein (329 aa).

An N-terminal signal peptide occupies residues 1 to 16 (MKTVLLFVVLVGLAYC). Positions 38-48 (SSSSSSSSSSS) are enriched in low complexity. The interval 38–80 (SSSSSSSSSSSSGGGGSSGGGASGGGGGSSSGGGGASGGGGGG) is disordered. Positions 49-80 (SGGGGSSGGGASGGGGGSSSGGGGASGGGGGG) are enriched in gly residues.

As to expression, prismatic layer of shell (at protein level). Expressed primarily in the mantle with highest level in the mantle edge and lower level in the mantle pallium.

The protein localises to the secreted. This Pinctada maxima (Silver-lipped pearl oyster) protein is Serine, glycine and glutamine-rich protein.